A 146-amino-acid polypeptide reads, in one-letter code: MQVLTKRYPKNCLLTVMDRYAAEVHNMEQVVMIPSLLRDVQLSGPGGQAQAEAPDLYTYFTMLKAICVDVDHGLLPREEWQAKVAGSEENGTAETEEVEDESASGELDLEAQFHLHFSSLHHILMHLTEKAQEVTRKYQEMTGQVW.

The disordered stretch occupies residues 83-104 (KVAGSEENGTAETEEVEDESAS). Residues 94–104 (ETEEVEDESAS) are compositionally biased toward acidic residues.

It belongs to the SPOT14 family. As to quaternary structure, homodimer. Heterodimer with MID1IP1. Interacts with THRB and PLAGL1. As to expression, mainly expressed in tissues that synthesize triglycerides.

The protein resides in the nucleus. It is found in the cytoplasm. Its function is as follows. Plays a role in the regulation of lipogenesis, especially in lactating mammary gland. Important for the biosynthesis of triglycerides with medium-length fatty acid chains. May modulate lipogenesis by interacting with MID1IP1 and preventing its interaction with ACACA. May function as transcriptional coactivator. May modulate the transcription factor activity of THRB. The polypeptide is Thyroid hormone-inducible hepatic protein (THRSP) (Homo sapiens (Human)).